The following is a 501-amino-acid chain: Ammonium transporter 2 member 2 (501 aa).

Transmembrane regions (helical) follow at residues 35 to 55 (VAATFVGIQSMPGLVVIYGSI), 64 to 84 (SAFMALYAYASTLIVWVLVGF), 140 to 160 (LVLFEFEFAAITLVLLAGSLL), 174 to 194 (LWLLFSYTVGAFSLWGGGFLY), 203 to 223 (GGYVIHLSSGVAGFTAAYWVG), 238 to 258 (ILLMIAGGGLLWLGWAGFNGG), 274 to 294 (TNVSAATSLLTWTCLDVIFFG), 298 to 318 (VIGAVQGMMTGLVCITPGAGL), 322 to 342 (WSAMLMGMFAGSVPWFTMMIL), 356 to 376 (LAVFHTHAVAGILGGVLTGLL), and 412 to 432 (FVTVWNLIVTSAILLCIGLFI).

This sequence belongs to the ammonia transporter channel (TC 1.A.11.2) family.

The protein resides in the membrane. Involved in ammonium transport. The chain is Ammonium transporter 2 member 2 (AMT2-2) from Oryza sativa subsp. japonica (Rice).